The following is a 451-amino-acid chain: CBL-interacting protein kinase 22 (451 aa).

Residues 26–301 (YELGRVLGQG…IGEIFDHPWL (276 aa)) enclose the Protein kinase domain. ATP is bound by residues 32–40 (LGQGASSKV) and lysine 55. Aspartate 165 (proton acceptor) is an active-site residue. The tract at residues 183–216 (DFGLSAFADADQHLGATDGLAATHCGSPAYVAPE) is activation loop. Residues 330 to 356 (ELEQAMELNAFDIIGFASGCDLSGLIG) form the NAF domain. Residues 361-389 (RVRFVLPGGDSKSVLDKVEKLGREEGLVV) are PPI.

The protein belongs to the protein kinase superfamily. CAMK Ser/Thr protein kinase family. SNF1 subfamily. Mn(2+) serves as cofactor.

The enzyme catalyses L-seryl-[protein] + ATP = O-phospho-L-seryl-[protein] + ADP + H(+). The catalysed reaction is L-threonyl-[protein] + ATP = O-phospho-L-threonyl-[protein] + ADP + H(+). In terms of biological role, CIPK serine-threonine protein kinases interact with CBL proteins. Binding of a CBL protein to the regulatory NAF domain of CIPK protein lead to the activation of the kinase in a calcium-dependent manner. This Oryza sativa subsp. japonica (Rice) protein is CBL-interacting protein kinase 22 (CIPK22).